We begin with the raw amino-acid sequence, 357 residues long: DNA replication and repair protein RecF (357 aa).

30–37 (GANGSGKT) serves as a coordination point for ATP.

Belongs to the RecF family.

It localises to the cytoplasm. Its function is as follows. The RecF protein is involved in DNA metabolism; it is required for DNA replication and normal SOS inducibility. RecF binds preferentially to single-stranded, linear DNA. It also seems to bind ATP. The polypeptide is DNA replication and repair protein RecF (Citrobacter koseri (strain ATCC BAA-895 / CDC 4225-83 / SGSC4696)).